The following is a 132-amino-acid chain: Small ribosomal subunit protein uS8 (132 aa).

Belongs to the universal ribosomal protein uS8 family. Part of the 30S ribosomal subunit. Contacts proteins S5 and S12.

One of the primary rRNA binding proteins, it binds directly to 16S rRNA central domain where it helps coordinate assembly of the platform of the 30S subunit. The sequence is that of Small ribosomal subunit protein uS8 from Streptococcus pneumoniae (strain Taiwan19F-14).